The following is a 217-amino-acid chain: Protein-L-isoaspartate O-methyltransferase (217 aa).

Ser59 is an active-site residue.

It belongs to the methyltransferase superfamily. L-isoaspartyl/D-aspartyl protein methyltransferase family.

It is found in the cytoplasm. The catalysed reaction is [protein]-L-isoaspartate + S-adenosyl-L-methionine = [protein]-L-isoaspartate alpha-methyl ester + S-adenosyl-L-homocysteine. Its function is as follows. Catalyzes the methyl esterification of L-isoaspartyl residues in peptides and proteins that result from spontaneous decomposition of normal L-aspartyl and L-asparaginyl residues. It plays a role in the repair and/or degradation of damaged proteins. The sequence is that of Protein-L-isoaspartate O-methyltransferase (pcm) from Methanothermobacter thermautotrophicus (strain ATCC 29096 / DSM 1053 / JCM 10044 / NBRC 100330 / Delta H) (Methanobacterium thermoautotrophicum).